We begin with the raw amino-acid sequence, 506 residues long: Aerotaxis receptor (506 aa).

At 1 to 166 (MSSHPYVTQQ…PSLPLRWRAR (166 aa)) the chain is on the cytoplasmic side. Residues 167 to 186 (GVMTLMFILLAAMLWFVAAP) traverse the membrane as a helical segment. At 187–190 (VVTY) the chain is on the periplasmic side. Residues 191–209 (ILCALVVLLASACFEWQIV) traverse the membrane as a helical segment. Over 210–506 (RPIENVAHQA…RLEDAVTVLH (297 aa)) the chain is Cytoplasmic. In terms of domain architecture, Methyl-accepting transducer spans 263-492 (QVSSVRNGSE…ESAQVSAMVK (230 aa)).

It belongs to the methyl-accepting chemotaxis (MCP) protein family.

It is found in the cell inner membrane. Its function is as follows. Signal transducer for aerotaxis. The aerotactic response is the accumulation of cells around air bubbles. The nature of the sensory stimulus detected by this protein is the proton motive force or cellular redox state. It uses a FAD prosthetic group as a redox sensor to monitor oxygen levels. This chain is Aerotaxis receptor (aer), found in Escherichia coli (strain K12).